The primary structure comprises 228 residues: Uracil-DNA glycosylase (228 aa).

Aspartate 64 (proton acceptor) is an active-site residue.

It belongs to the uracil-DNA glycosylase (UDG) superfamily. UNG family.

It localises to the cytoplasm. It carries out the reaction Hydrolyzes single-stranded DNA or mismatched double-stranded DNA and polynucleotides, releasing free uracil.. Functionally, excises uracil residues from the DNA which can arise as a result of misincorporation of dUMP residues by DNA polymerase or due to deamination of cytosine. In Yersinia pestis bv. Antiqua (strain Antiqua), this protein is Uracil-DNA glycosylase.